Here is a 360-residue protein sequence, read N- to C-terminus: Phosphoserine aminotransferase (360 aa).

Arg-41 is a binding site for L-glutamate. Residues 75–76 (GR), Trp-101, Thr-152, Asp-172, and Gln-195 each bind pyridoxal 5'-phosphate. The residue at position 196 (Lys-196) is an N6-(pyridoxal phosphate)lysine. 237 to 238 (NT) contributes to the pyridoxal 5'-phosphate binding site.

Belongs to the class-V pyridoxal-phosphate-dependent aminotransferase family. SerC subfamily. As to quaternary structure, homodimer. It depends on pyridoxal 5'-phosphate as a cofactor.

It is found in the cytoplasm. It catalyses the reaction O-phospho-L-serine + 2-oxoglutarate = 3-phosphooxypyruvate + L-glutamate. It carries out the reaction 4-(phosphooxy)-L-threonine + 2-oxoglutarate = (R)-3-hydroxy-2-oxo-4-phosphooxybutanoate + L-glutamate. It functions in the pathway amino-acid biosynthesis; L-serine biosynthesis; L-serine from 3-phospho-D-glycerate: step 2/3. Its pathway is cofactor biosynthesis; pyridoxine 5'-phosphate biosynthesis; pyridoxine 5'-phosphate from D-erythrose 4-phosphate: step 3/5. In terms of biological role, catalyzes the reversible conversion of 3-phosphohydroxypyruvate to phosphoserine and of 3-hydroxy-2-oxo-4-phosphonooxybutanoate to phosphohydroxythreonine. The chain is Phosphoserine aminotransferase from Pseudoalteromonas translucida (strain TAC 125).